The primary structure comprises 201 residues: Adapter protein MecA 1 (201 aa).

Belongs to the MecA family. In terms of assembly, homodimer.

In terms of biological role, enables the recognition and targeting of unfolded and aggregated proteins to the ClpC protease or to other proteins involved in proteolysis. Acts negatively in the development of competence by binding ComK and recruiting it to the ClpCP protease. When overexpressed, inhibits sporulation. Also involved in Spx degradation by ClpC. This Halalkalibacterium halodurans (strain ATCC BAA-125 / DSM 18197 / FERM 7344 / JCM 9153 / C-125) (Bacillus halodurans) protein is Adapter protein MecA 1 (mecA1).